The primary structure comprises 380 residues: MYLRFLHLWHFRNYRDQKISFEAPKTILVGENAQGKTNLLEAVELLATLRSRRAGRDRELVQQGAEKARIAATVERLGVAHELAMELRSQGGRSLRVNGQGLRRQSDFLGQVSAVVFSSLDLELVRGAPEARRTWLDGVLLQLEPAYLGLVEQYRQILKQRNALLKQDPLAAGDKVPQMAFWDAQLATLGSRILRRRARLLQRLEPLAARWHQAISGGRETLSLTYRPQVPLPDPQADPKVVQAQFLAAIRAKAAAEQALGTSLVGPHRDEVELGIDGVAARAYGSQGQQRTLVLALKLAELELIEQVKGDPPLLLLDDVLAELDLHRQNQLLEAIQERVQTLVTTTHLGSFDAAWLQGAQILQVHQGQIAPSPASLPLA.

Residue 30-37 coordinates ATP; it reads GENAQGKT.

Belongs to the RecF family.

The protein resides in the cytoplasm. In terms of biological role, the RecF protein is involved in DNA metabolism; it is required for DNA replication and normal SOS inducibility. RecF binds preferentially to single-stranded, linear DNA. It also seems to bind ATP. The protein is DNA replication and repair protein RecF of Synechococcus sp. (strain JA-3-3Ab) (Cyanobacteria bacterium Yellowstone A-Prime).